Here is a 435-residue protein sequence, read N- to C-terminus: Matrix remodeling-associated protein 8 (435 aa).

The signal sequence occupies residues 1–22 (MEIRCKVLVCHIILLHSATVYL). The Extracellular segment spans residues 23–337 (YSVPASQQNP…QESRLHFFQQ (315 aa)). Ig-like V-type domains lie at 32-158 (PESV…LNIT) and 156-293 (NITK…LSVS). N-linked (GlcNAc...) asparagine glycans are attached at residues Asn-41, Asn-120, Asn-156, Asn-245, and Asn-324. Cys-54 and Cys-138 are disulfide-bonded. Cysteines 187 and 273 form a disulfide. Residues 338-358 (LGYILATLLLFILLLTAVILI) traverse the membrane as a helical segment. The Cytoplasmic portion of the chain corresponds to 359–435 (TRKHQKRGYA…DLELRKEYCK (77 aa)).

As to quaternary structure, homodimer in cis. Does not appear to form trans-homodimers.

It is found in the cell membrane. Transmembrane protein which can modulate activity of various signaling pathways, probably via binding to integrin ITGAV:ITGB3. Mediates heterophilic cell-cell interactions in vitro. The protein is Matrix remodeling-associated protein 8 (mxra8) of Xenopus laevis (African clawed frog).